A 91-amino-acid polypeptide reads, in one-letter code: Cytochrome c-554(547) (91 aa).

The heme c site is built by C15, C18, H19, and M64.

Monomer. Post-translationally, binds 1 heme c group covalently per subunit.

The protein is Cytochrome c-554(547) of Halothiobacillus neapolitanus (Thiobacillus neapolitanus).